The sequence spans 302 residues: D-alanine--D-alanine ligase (302 aa).

The ATP-grasp domain maps to 104 to 296; sequence KLVFERFAIP…FPDLVTWLVE (193 aa). Residue 130–183 coordinates ATP; that stretch reads AMARPYVVKPLDQGSSVGVTIVTSETNDLPFSRDDWPYGRQVMVERFIPGRELT. Mg(2+) contacts are provided by Asp-251, Glu-263, and Asn-265.

This sequence belongs to the D-alanine--D-alanine ligase family. Mg(2+) serves as cofactor. Requires Mn(2+) as cofactor.

Its subcellular location is the cytoplasm. The catalysed reaction is 2 D-alanine + ATP = D-alanyl-D-alanine + ADP + phosphate + H(+). Its pathway is cell wall biogenesis; peptidoglycan biosynthesis. Its function is as follows. Cell wall formation. In Rhodospirillum rubrum (strain ATCC 11170 / ATH 1.1.1 / DSM 467 / LMG 4362 / NCIMB 8255 / S1), this protein is D-alanine--D-alanine ligase.